Here is a 516-residue protein sequence, read N- to C-terminus: Probable cytosol aminopeptidase (516 aa).

Mn(2+) is bound by residues K288 and D293. The active site involves K300. Positions 311, 370, and 372 each coordinate Mn(2+). Residue R374 is part of the active site.

It belongs to the peptidase M17 family. Mn(2+) serves as cofactor.

It is found in the cytoplasm. It carries out the reaction Release of an N-terminal amino acid, Xaa-|-Yaa-, in which Xaa is preferably Leu, but may be other amino acids including Pro although not Arg or Lys, and Yaa may be Pro. Amino acid amides and methyl esters are also readily hydrolyzed, but rates on arylamides are exceedingly low.. The catalysed reaction is Release of an N-terminal amino acid, preferentially leucine, but not glutamic or aspartic acids.. In terms of biological role, presumably involved in the processing and regular turnover of intracellular proteins. Catalyzes the removal of unsubstituted N-terminal amino acids from various peptides. The protein is Probable cytosol aminopeptidase of Cupriavidus taiwanensis (strain DSM 17343 / BCRC 17206 / CCUG 44338 / CIP 107171 / LMG 19424 / R1) (Ralstonia taiwanensis (strain LMG 19424)).